Here is an 881-residue protein sequence, read N- to C-terminus: Disks large homolog 2 (881 aa).

Disordered stretches follow at residues histidine 16 to alanine 41 and leucine 63 to arginine 88. PDZ domains are found at residues glutamate 155–arginine 242, glutamate 250–threonine 337, and lysine 424–proline 505. In terms of domain architecture, SH3 spans lysine 539–glutamate 609. Positions alanine 683 to glutamate 866 constitute a Guanylate kinase-like domain. Residues glycine 709–aspartate 729 are disordered.

The protein belongs to the MAGUK family.

The protein localises to the cell membrane. Its subcellular location is the postsynaptic density. The protein resides in the synapse. It localises to the membrane. It is found in the cell projection. The protein localises to the axon. Its subcellular location is the perikaryon. In terms of biological role, may play a role in synapse assembly and function. The polypeptide is Disks large homolog 2 (dlg2) (Danio rerio (Zebrafish)).